The following is a 584-amino-acid chain: Pentatricopeptide repeat-containing protein At2g01510, mitochondrial (584 aa).

The transit peptide at 1-20 (MLAKQTPLTKQMLSELLRAS) directs the protein to the mitochondrion. PPR repeat units lie at residues 73–107 (RIFLWNTLFKGYVRNQLPFESLLLYKKMRDLGVRP), 108–142 (DEFTYPFVVKAISQLGDFSCGFALHAHVVKYGFGC), 143–173 (LGIVATELVMMYMKFGELSSAEFLFESMQVK), 174–208 (DLVAWNAFLAVCVQTGNSAIALEYFNKMCADAVQF), 209–243 (DSFTVVSMLSACGQLGSLEIGEEIYDRARKEEIDC), 244–274 (NIIVENARLDMHLKCGNTEAARVLFEEMKQR), 275–309 (NVVSWSTMIVGYAMNGDSREALTLFTTMQNEGLRP), 310–344 (NYVTFLGVLSACSHAGLVNEGKRYFSLMVQSNDKN), and 348–378 (RKEHYACMVDLLGRSGLLEEAYEFIKKMPVE). Residues 383–458 (IWGALLGACA…VAAYSSVEFE (76 aa)) are type E motif. Positions 459-489 (GKIHFFNRGDKSHPQSKAIYEKLDEILKKIR) are type E(+) motif. The interval 490 to 584 (KMGYVPDTCS…NGVCSCKEFW (95 aa)) is type DYW motif.

It belongs to the PPR family. PCMP-H subfamily.

It localises to the mitochondrion. This is Pentatricopeptide repeat-containing protein At2g01510, mitochondrial (PCMP-H37) from Arabidopsis thaliana (Mouse-ear cress).